The chain runs to 364 residues: MQDRQKAQDYRALLLADTPLIDVRAPIEFEQGAMPGAINLPLMMDDERAAVGTCYKRQGADAALALGHRLVCGDIRQQRLEAWKAAYQRFPNGYLCCARGGQRSHIVQRWLQETGIDCPLIEGGYKALRQTAIQATWQLAQKPILLIGGCTGSGKTQLVRQQPNGVDLEGLARHRGSSFGRTLNPQLSQASFENKLAVELLKINARQTLKRWVLEDEGRTIGANHLPECLRERMAQAPIAVVEDPFALRLERLREEYFIRMHHDFTHAYGDEAGWQAYSEYLHHGLFAIRRRLGLQRFAELTDTLDRALAEQLSSGSTDGHMAWLVPLLNEYYDPMYRYQLEKKAANIVFRGTWQDVANWLKAQ.

The 124-residue stretch at 14-137 (LLADTPLIDV…LRQTAIQATW (124 aa)) folds into the Rhodanese domain. Residue cysteine 97 is the S-selanylcysteine intermediate of the active site. Glycine 149 lines the (2E)-geranyl diphosphate pocket.

This sequence belongs to the SelU family. Monomer.

It carries out the reaction 5-methylaminomethyl-2-thiouridine(34) in tRNA + selenophosphate + (2E)-geranyl diphosphate + H2O + H(+) = 5-methylaminomethyl-2-selenouridine(34) in tRNA + (2E)-thiogeraniol + phosphate + diphosphate. The catalysed reaction is 5-methylaminomethyl-2-thiouridine(34) in tRNA + (2E)-geranyl diphosphate = 5-methylaminomethyl-S-(2E)-geranyl-thiouridine(34) in tRNA + diphosphate. The enzyme catalyses 5-methylaminomethyl-S-(2E)-geranyl-thiouridine(34) in tRNA + selenophosphate + H(+) = 5-methylaminomethyl-2-(Se-phospho)selenouridine(34) in tRNA + (2E)-thiogeraniol. It catalyses the reaction 5-methylaminomethyl-2-(Se-phospho)selenouridine(34) in tRNA + H2O = 5-methylaminomethyl-2-selenouridine(34) in tRNA + phosphate. Its function is as follows. Involved in the post-transcriptional modification of the uridine at the wobble position (U34) of tRNA(Lys), tRNA(Glu) and tRNA(Gln). Catalyzes the conversion of 2-thiouridine (S2U-RNA) to 2-selenouridine (Se2U-RNA). Acts in a two-step process involving geranylation of 2-thiouridine (S2U) to S-geranyl-2-thiouridine (geS2U) and subsequent selenation of the latter derivative to 2-selenouridine (Se2U) in the tRNA chain. The chain is tRNA 2-selenouridine synthase from Salmonella typhimurium (strain LT2 / SGSC1412 / ATCC 700720).